A 565-amino-acid chain; its full sequence is Periplasmic trehalase (565 aa).

The signal sequence occupies residues 1–30; it reads MKSPAPSRPQKMALIPACIFLCFAALSVQA. Substrate-binding positions include R152, 159-160, N196, 205-207, 277-279, and G310; these read WD, RSQ, and RPE. Residues D312 and E496 each act as proton donor/acceptor in the active site. E511 serves as a coordination point for substrate. The interval 539 to 565 is disordered; it reads CDNVPATRPLSESTTQPVKPKEAEPTL.

This sequence belongs to the glycosyl hydrolase 37 family. Monomer.

It is found in the periplasm. It catalyses the reaction alpha,alpha-trehalose + H2O = alpha-D-glucose + beta-D-glucose. Its function is as follows. Provides the cells with the ability to utilize trehalose at high osmolarity by splitting it into glucose molecules that can subsequently be taken up by the phosphotransferase-mediated uptake system. This is Periplasmic trehalase from Shigella dysenteriae serotype 1 (strain Sd197).